The following is a 184-amino-acid chain: Photosystem I assembly protein Ycf4 (184 aa).

Helical transmembrane passes span L22–S42 and I57–S77.

This sequence belongs to the Ycf4 family.

The protein localises to the plastid. It is found in the chloroplast thylakoid membrane. Seems to be required for the assembly of the photosystem I complex. The chain is Photosystem I assembly protein Ycf4 from Daucus carota (Wild carrot).